A 334-amino-acid chain; its full sequence is N-chimaerin (334 aa).

The span at M1–R10 shows a compositional bias: polar residues. Residues M1–Q22 are disordered. T67 is modified (phosphothreonine). The Phorbol-ester/DAG-type zinc-finger motif lies at V80–C130. Residues C143–F334 enclose the Rho-GAP domain. A Phosphothreonine modification is found at T215.

As to quaternary structure, interacts with EPHA4; effector of EPHA4 in axon guidance linking EPHA4 activation to RAC1 regulation. Phosphorylated. Phosphorylation is EPHA4 kinase activity-dependent. In terms of tissue distribution, in neurons in brain regions that are involved in learning and memory processes.

Functionally, GTPase-activating protein for p21-rac and a phorbol ester receptor. Involved in the assembly of neuronal locomotor circuits as a direct effector of EPHA4 in axon guidance. The sequence is that of N-chimaerin (Chn1) from Rattus norvegicus (Rat).